We begin with the raw amino-acid sequence, 492 residues long: uncharacterized protein (492 aa).

13 helical membrane-spanning segments follow: residues Val-67–Leu-87, Ala-88–Gly-108, Ile-110–Val-130, Gly-157–Gly-177, Tyr-185–Leu-205, Ile-232–Ile-252, Phe-255–Phe-275, Leu-294–Val-314, Trp-333–Trp-353, Phe-367–Gln-387, Leu-392–Leu-412, Ser-434–Phe-454, and Gly-464–Ile-484.

It belongs to the major facilitator superfamily. Proton-dependent oligopeptide transporter (POT/PTR) (TC 2.A.17) family.

The protein resides in the cell membrane. This is an uncharacterized protein from Bacillus subtilis (strain 168).